The primary structure comprises 595 residues: Aspartate--tRNA(Asp/Asn) ligase (595 aa).

Glu178 is a binding site for L-aspartate. Residues 202–205 (QIFK) form an aspartate region. An L-aspartate-binding site is contributed by Arg224. ATP contacts are provided by residues 224–226 (RDE) and Gln233. Residue His458 coordinates L-aspartate. Residue Glu488 participates in ATP binding. Arg495 contacts L-aspartate. Position 540-543 (540-543 (GIDR)) interacts with ATP.

Belongs to the class-II aminoacyl-tRNA synthetase family. Type 1 subfamily. As to quaternary structure, homodimer.

It is found in the cytoplasm. The enzyme catalyses tRNA(Asx) + L-aspartate + ATP = L-aspartyl-tRNA(Asx) + AMP + diphosphate. Functionally, aspartyl-tRNA synthetase with relaxed tRNA specificity since it is able to aspartylate not only its cognate tRNA(Asp) but also tRNA(Asn). Reaction proceeds in two steps: L-aspartate is first activated by ATP to form Asp-AMP and then transferred to the acceptor end of tRNA(Asp/Asn). In Acaryochloris marina (strain MBIC 11017), this protein is Aspartate--tRNA(Asp/Asn) ligase.